Here is a 333-residue protein sequence, read N- to C-terminus: HTH-type transcriptional regulator Cphy_2742 (333 aa).

The region spanning 1–55 (MNIYDVSQKAGVSIATVSRVINGNPNVSEKTKQKVLDVMKEIGYTPNVFARGLGL) is the HTH lacI-type domain. The segment at residues 3–22 (IYDVSQKAGVSIATVSRVIN) is a DNA-binding region (H-T-H motif).

The protein localises to the cytoplasm. Functionally, involved in control of pectin and galacturonic acid metabolism. Probably represses a comprehensive set of pectin fermentation genes by binding a conserved palindrome at or downstream of their transcription start site to block transcription. In the presence of galacturonic acid may activate transcription of acetate synthesis and other aspects of carbon metabolism. The polypeptide is HTH-type transcriptional regulator Cphy_2742 (Lachnoclostridium phytofermentans (strain ATCC 700394 / DSM 18823 / ISDg) (Clostridium phytofermentans)).